The primary structure comprises 111 residues: Ig kappa chain V region 3368 (111 aa).

Residues 1–24 (ADIVMTQTPSSVSAAVGGTVTIKC) form a framework-1 region. The segment at 25–35 (QASESIGNELA) is complementarity-determining-1. A framework-2 region spans residues 36–50 (WYQQKPGQPPKLLIY). The complementarity-determining-2 stretch occupies residues 51–57 (RASKLAS). Residues 58 to 89 (GVSSRFKGSGSGTEFTLTISGVQCDDAGIYYC) are framework-3. A complementarity-determining-3 region spans residues 90 to 101 (QQDWNSNNVVNN). Residues 102-111 (FGGGTEVVVK) are framework-4.

This chain is Ig kappa chain V region 3368, found in Oryctolagus cuniculus (Rabbit).